Consider the following 156-residue polypeptide: MDITLTIFAQALAFAGLIWIVATKIWPPLLKAIEERQQKIAEGLAAADRSQKDLAQAQEKVNEALKDARTKANEIIDQAHARANQIIEAAKLEAIAEANRQKDLAQAEIDASATRAREELRRQVSSLAVSGAEKLLKREIDATAHKALLDELAAEI.

The helical transmembrane segment at 3–23 (ITLTIFAQALAFAGLIWIVAT) threads the bilayer.

Belongs to the ATPase B chain family. In terms of assembly, F-type ATPases have 2 components, F(1) - the catalytic core - and F(0) - the membrane proton channel. F(1) has five subunits: alpha(3), beta(3), gamma(1), delta(1), epsilon(1). F(0) has three main subunits: a(1), b(2) and c(10-14). The alpha and beta chains form an alternating ring which encloses part of the gamma chain. F(1) is attached to F(0) by a central stalk formed by the gamma and epsilon chains, while a peripheral stalk is formed by the delta and b chains.

Its subcellular location is the cell inner membrane. F(1)F(0) ATP synthase produces ATP from ADP in the presence of a proton or sodium gradient. F-type ATPases consist of two structural domains, F(1) containing the extramembraneous catalytic core and F(0) containing the membrane proton channel, linked together by a central stalk and a peripheral stalk. During catalysis, ATP synthesis in the catalytic domain of F(1) is coupled via a rotary mechanism of the central stalk subunits to proton translocation. Functionally, component of the F(0) channel, it forms part of the peripheral stalk, linking F(1) to F(0). This Xanthomonas campestris pv. campestris (strain 8004) protein is ATP synthase subunit b.